The following is a 309-amino-acid chain: High-affinity zinc uptake system protein AztC (309 aa).

Residues 1–24 (MKDWLFRIATCSIMTFSSLAAAQA) form the signal peptide. Position 61 (H61) interacts with Zn(2+). The tract at residues 117 to 132 (GGGHYHYIDGKAVFHA) is D-loop. H138 contributes to the Zn(2+) binding site. A disulfide bridge links C158 with C165. H204 is a Zn(2+) binding site. The interval 222 to 229 (QGVSTESE) is Z-loop. D279 serves as a coordination point for Zn(2+).

The protein belongs to the bacterial solute-binding protein 9 family. As to quaternary structure, monomer.

It localises to the periplasm. Its function is as follows. Part of the ATP-binding cassette (ABC) transport system AztABCD involved in zinc import. Binds zinc with high affinity and specificity and delivers it to the membrane permease for translocation into the cytoplasm. This chain is High-affinity zinc uptake system protein AztC, found in Paracoccus denitrificans (strain Pd 1222).